We begin with the raw amino-acid sequence, 76 residues long: Beta-defensin 121 (76 aa).

Residues 1–15 form the signal peptide; sequence MKLLLLLLTVTLLLA. 3 disulfides stabilise this stretch: C23-C50, C30-C44, and C34-C51.

The protein belongs to the beta-defensin family. In terms of tissue distribution, abundant expression in the male reproductive tract only.

It is found in the secreted. Has antibacterial activity. The protein is Beta-defensin 121 (DEFB121) of Macaca mulatta (Rhesus macaque).